The sequence spans 127 residues: Putative lipoprotein LprJ (127 aa).

An N-terminal signal peptide occupies residues 1-34 (MTAHTHDGTRTWRTGRQATTLLALLAGVFGGAAS). Residue C35 is the site of N-palmitoyl cysteine attachment. C35 carries S-diacylglycerol cysteine lipidation. Residues 35–99 (CAAPIQADMM…MAEINGMSRD (65 aa)) are Extracellular-facing. Residues 100–120 (MASTFTIVAIGTYCPAVIAPL) traverse the membrane as a helical segment. Residues 121-127 (MPNRLQA) are Cytoplasmic-facing.

As to quaternary structure, may interact with sensor protein KdpD. Modified by Lgt on Cys-35 with an S-linked diacylglycerol, signal peptide is removed by LspA, modified by Lnt with amide-linked fatty acid.

The protein resides in the cell membrane. In terms of biological role, overexpression induces expression of sensor protein kdpD gene at low K(+) concentrations (0 and 250 uM, tested in M.smegatis). This chain is Putative lipoprotein LprJ (lprJ), found in Mycobacterium tuberculosis (strain ATCC 25618 / H37Rv).